We begin with the raw amino-acid sequence, 123 residues long: Probable cyclase otaY (123 aa).

This sequence belongs to the aurE cyclase family.

It functions in the pathway mycotoxin biosynthesis. Probable cyclase; part of the gene cluster that mediates the biosynthesis of ochratoxin A (OTA), a mycotoxin composed of a chlorinated type I polyketide dihydroisocoumarin moiety linked to L-phenylalanine, and demonstrated to have nephrotoxic, immunotoxic, genotoxic, neurotoxic, and teratogenic properties. OtaY is probably involved in the polyketide cyclization. The pathway begins with the highly reducing polyketide synthase otaA that catalyzes the formation of the isocoumarin group during the initial stages of biosynthesis, starting from one acetate and 4 malonate units, to originate the characteristic pentaketide skeleton 7-methylmellein (7-MM) of the OTA molecule. The newly identified cyclase otaY might be involved in the polyketide cyclization reaction during the initial steps of the OTA biosynthesis. 7-MM is then oxidized into 7-carboxymellein (also called ochratoxin beta) by the cytochrome P450 monooxygenase otaC. The NRPS encoded by the otaB gene is involved in the linking of phenylalanine to the dihydroisocoumarin ring. The reaction catalyzed by NRPS results in the production of ochratoxin B (OTB), which is the non-chlorinated analog of OTA and which subsequently serves as the substrate of the halogenase otaD for chlorination activity to form the final molecular structure of OTA, containing a chlorine atom in the C-5 position of the molecule. In Aspergillus carbonarius (strain ITEM 5010), this protein is Probable cyclase otaY.